Consider the following 251-residue polypeptide: Probable transcriptional regulatory protein BLD_0450 (251 aa).

The protein belongs to the TACO1 family.

The protein localises to the cytoplasm. In Bifidobacterium longum (strain DJO10A), this protein is Probable transcriptional regulatory protein BLD_0450.